The chain runs to 378 residues: Queuine tRNA-ribosyltransferase (378 aa).

The Proton acceptor role is filled by D91. Substrate contacts are provided by residues D91–F95, D145, Q189, and G216. An RNA binding region spans residues G247 to D253. D266 functions as the Nucleophile in the catalytic mechanism. Residues T271 to R275 form an RNA binding; important for wobble base 34 recognition region. Zn(2+) is bound by residues C304, C306, C309, and H335.

Belongs to the queuine tRNA-ribosyltransferase family. In terms of assembly, homodimer. Within each dimer, one monomer is responsible for RNA recognition and catalysis, while the other monomer binds to the replacement base PreQ1. It depends on Zn(2+) as a cofactor.

The enzyme catalyses 7-aminomethyl-7-carbaguanine + guanosine(34) in tRNA = 7-aminomethyl-7-carbaguanosine(34) in tRNA + guanine. The protein operates within tRNA modification; tRNA-queuosine biosynthesis. In terms of biological role, catalyzes the base-exchange of a guanine (G) residue with the queuine precursor 7-aminomethyl-7-deazaguanine (PreQ1) at position 34 (anticodon wobble position) in tRNAs with GU(N) anticodons (tRNA-Asp, -Asn, -His and -Tyr). Catalysis occurs through a double-displacement mechanism. The nucleophile active site attacks the C1' of nucleotide 34 to detach the guanine base from the RNA, forming a covalent enzyme-RNA intermediate. The proton acceptor active site deprotonates the incoming PreQ1, allowing a nucleophilic attack on the C1' of the ribose to form the product. After dissociation, two additional enzymatic reactions on the tRNA convert PreQ1 to queuine (Q), resulting in the hypermodified nucleoside queuosine (7-(((4,5-cis-dihydroxy-2-cyclopenten-1-yl)amino)methyl)-7-deazaguanosine). This Vibrio atlanticus (strain LGP32) (Vibrio splendidus (strain Mel32)) protein is Queuine tRNA-ribosyltransferase.